Reading from the N-terminus, the 590-residue chain is Oleate hydratase (590 aa).

FAD-binding residues include A33, E56, S64, and E82. E82 (proton acceptor) is an active-site residue. Y200 serves as the catalytic Proton donor. Residues V249, S291, T508, and S512 each contribute to the FAD site.

Belongs to the oleate hydratase family. Monomer and homodimer. Both forms seem to be active. Requires FAD as cofactor.

The enzyme catalyses (R)-10-hydroxyoctadecanoate = (9Z)-octadecenoate + H2O. It catalyses the reaction (9Z)-octadecenoate + H2O = 10-hydroxyoctadecanoate. It carries out the reaction (9Z)-hexadecenoate + H2O = 10-hydroxyhexadecanoate. The catalysed reaction is (9Z,12Z)-octadecadienoate + H2O = (12Z)-10-hydroxyoctadecenoate. The enzyme catalyses (12Z)-10-hydroxyoctadecenoate + H2O = 10,13-dihydroxyoctadecanoate. It catalyses the reaction (9Z,12Z,15Z)-octadecatrienoate + H2O = (12Z,15Z)-10-hydroxyoctadecadienoate. It functions in the pathway lipid metabolism; fatty acid metabolism. Functionally, catalyzes the hydration of oleate at its cis-9-double bond to yield 10-hydroxyoctadecanoate, probably in the (R) configuration, and of linoleate at its cis-9- and cis-12-double bond to yield 10-hydroxy-12-octadecenoate and 10,13-dihydroxyoctadecanoate. Is not active on trans-double bonds and esterified fatty acids as substrate; is only active on cis-9- and/or cis-12-double bond of C16 and C18 fatty acids without any trans-configurations, producing 10-hydroxy and 10,13-dihydroxy derivatives. Appears to play a role in oleic acid detoxification and bacterial virulence. This chain is Oleate hydratase (sph), found in Streptococcus pyogenes serotype M49 (strain NZ131).